The sequence spans 226 residues: N-(5'-phosphoribosyl)anthranilate isomerase (226 aa).

The protein belongs to the TrpF family.

The enzyme catalyses N-(5-phospho-beta-D-ribosyl)anthranilate = 1-(2-carboxyphenylamino)-1-deoxy-D-ribulose 5-phosphate. It functions in the pathway amino-acid biosynthesis; L-tryptophan biosynthesis; L-tryptophan from chorismate: step 3/5. The polypeptide is N-(5'-phosphoribosyl)anthranilate isomerase (trpF) (Methanocaldococcus jannaschii (strain ATCC 43067 / DSM 2661 / JAL-1 / JCM 10045 / NBRC 100440) (Methanococcus jannaschii)).